We begin with the raw amino-acid sequence, 330 residues long: Tryptophan--tRNA ligase (330 aa).

ATP is bound by residues 10-12 and 18-19; these read QPS and GN. Positions 11 to 19 match the 'HIGH' region motif; it reads PSGSVTLGN. Asp133 provides a ligand contact to L-tryptophan. Residues 145 to 147, Ile184, and 193 to 197 each bind ATP; these read GED and KMSKS. Residues 193-197 carry the 'KMSKS' region motif; sequence KMSKS.

The protein belongs to the class-I aminoacyl-tRNA synthetase family. As to quaternary structure, homodimer.

The protein resides in the cytoplasm. The enzyme catalyses tRNA(Trp) + L-tryptophan + ATP = L-tryptophyl-tRNA(Trp) + AMP + diphosphate + H(+). In terms of biological role, catalyzes the attachment of tryptophan to tRNA(Trp). This is Tryptophan--tRNA ligase from Bacillus subtilis (strain 168).